The sequence spans 920 residues: MNAQLDGLSVSSSSTGSLGSAAAAAGGGGGAGLRLLSANVRQLHQALTALLSEPEREQFTHCLNAYHARRNVFDLVRTLRVLLDSPVKRRLLPMLRLVIPRSDQLLFDQYTAEGLYLPATTPYRQPAWAAPDGAGPGEVRLVSLRRAKAHEGLGFSIRGGSEHGVGIYVSLVEPGSLAEKEGLRVGDQILRVNDKSLARVTHAEAVKALKGSKKLVLSVYSAGRIPGGYVTNHIYTWVDPQGRSTSPPSSLPHGSTLRQHEDDRRSALHLLQSGDEKKVNLVLGDGRSLGLTIRGGAEYGLGIYITGVDPGSEAESSGLKVGDQILEVNGRSFLSILHDEAVKLLKSSRHLILTVKDVGRLPHARTTVDQTKWIASSRIGESITNSAGFPGDLTEEGTNKPGFYKGPAGSQVTLSSLGNQTRALLDDQARHLLTEQERATMMYYLDQYRGGTISVEALVMALFELLNTHAKFSLLSEVRGIISPQDLDRFDHLVLRREIESMKARQPPGPGVGDTYSMVSYSDTGSSTGSHGTSTTVSSARERLLWLIDLMENTLDLEGTCETTQGSTNALPDVSVDDVRSPSEDLPGIKPPPPPPPLAQGHDRLLGQTRKPVREDSAPLSSAAHSGIVFSAPRNRSPPPPPGIAPTPTPGPSSARDSPSSPIYASISHANPSSRKPLDTHLALVNQHPIGPFPRVQSPPHLKSPPAEAPGAGACLPPPSPSEHADAMGANQHFVLVEVHRPDSEPDVNEVRALPQTRTASTLSQLSDSGQTLSEDSGVDAGETEASTSGRGRQTANTKNKNGKELPQTERTTEGANKPPGLLEPTSTLIRVRKSAATLGIAIEGGANTRQPLPRIVTIQRGGSAHNCGQLKVGHVILEVNGQTLRGKEHREAARVIAEAFKTKERDYIDFLVTEFNVML.

The PDZ 1 domain maps to 141 to 224; it reads LVSLRRAKAH…LVLSVYSAGR (84 aa). Residues 241 to 262 are disordered; that stretch reads QGRSTSPPSSLPHGSTLRQHED. A compositionally biased stretch (polar residues) spans 242–257; the sequence is GRSTSPPSSLPHGSTL. Residues 278-360 form the PDZ 2 domain; that stretch reads KVNLVLGDGR…LILTVKDVGR (83 aa). Disordered stretches follow at residues 502 to 536, 561 to 603, 630 to 730, and 752 to 828; these read MKARQPPGPGVGDTYSMVSYSDTGSSTGSHGTSTT, CETT…QGHD, FSAP…AMGA, and RALP…PTST. The segment covering 520-536 has biased composition (low complexity); that stretch reads SYSDTGSSTGSHGTSTT. The segment covering 561-570 has biased composition (polar residues); that stretch reads CETTQGSTNA. Composition is skewed to pro residues over residues 589–598 and 636–651; these read IKPPPPPPPL and RSPPPPPGIAPTPTPG. Residues 655–674 show a composition bias toward polar residues; sequence ARDSPSSPIYASISHANPSS. Position 698 is a phosphoserine (Ser698). 2 stretches are compositionally biased toward polar residues: residues 756-775 and 785-800; these read QTRTASTLSQLSDSGQTLSE and EASTSGRGRQTANTKN. Basic and acidic residues predominate over residues 802-813; sequence NGKELPQTERTT. Positions 829–912 constitute a PDZ 3 domain; it reads LIRVRKSAAT…TKERDYIDFL (84 aa).

As to quaternary structure, forms homooligomers. Interacts (via C-terminal PDZ domain) with MYO15A; this interaction is necessary for localization of WHRN to stereocilia tips. Interacts (via C-terminal PDZ domain) with MPP1/p55. Interacts with LRRC4C/NGL1. Interacts with MYO7A. Interacts with RPGR. Interacts with EPS8. Interacts with CASK. Interacts with CIB2. Component of USH2 complex, composed of ADGRV1, PDZD7, USH2A and WHRN. Interacts (via PDZ domains) with PDZD7; the interaction is direct. Interacts (via N-terminal PDZ domain) with USH2A (via cytoplasmic region). Interacts with ADGRV1/MASS1 (via cytoplasmic region). Ubiquitous. Highly expressed in heart, spleen, lung and liver. Highly expressed in brain, in the olfactory bulb, thalamus, layers III-V of the cerebral cortex and the molecular layer of cerebellum. Detected in soma and dendrites of thalamic neurons, and in cerebrum in cell bodies and apical dendrites of pyramidal neurons. Expressed in retina and inner ear.

The protein localises to the cytoplasm. The protein resides in the cell projection. Its subcellular location is the stereocilium. It localises to the growth cone. It is found in the synapse. Functionally, involved in hearing and vision as member of the USH2 complex. Necessary for elongation and maintenance of inner and outer hair cell stereocilia in the organ of Corti in the inner ear. Involved in the maintenance of the hair bundle ankle region, which connects stereocilia in cochlear hair cells of the inner ear. In retina photoreceptors, required for the maintenance of periciliary membrane complex that seems to play a role in regulating intracellular protein transport. The sequence is that of Whirlin from Rattus norvegicus (Rat).